Consider the following 218-residue polypeptide: Cell division protein SepF (218 aa).

The disordered stretch occupies residues 25–115 (DVAASTDNVI…IANRREQYQQ (91 aa)). The segment covering 29-43 (STDNVIPRSQQSVRA) has biased composition (polar residues). A compositionally biased stretch (basic and acidic residues) spans 47 to 63 (PKQEPRNNHVQQDHQAR).

It belongs to the SepF family. In terms of assembly, homodimer. Interacts with FtsZ.

Its subcellular location is the cytoplasm. Cell division protein that is part of the divisome complex and is recruited early to the Z-ring. Probably stimulates Z-ring formation, perhaps through the cross-linking of FtsZ protofilaments. Its function overlaps with FtsA. The protein is Cell division protein SepF of Streptococcus pyogenes serotype M12 (strain MGAS2096).